Here is a 183-residue protein sequence, read N- to C-terminus: Proton-transporting V-type ATPase complex assembly regulator TMEM9 (183 aa).

The first 20 residues, 1 to 20, serve as a signal peptide directing secretion; the sequence is MKLLCLVAVVGCLLVPPAQA. N-linked (GlcNAc...) asparagine glycans are attached at residues asparagine 21, asparagine 38, and asparagine 47. Topologically, residues 21 to 89 are extracellular; sequence NKSSEDIRCK…YEERSTTTIK (69 aa). The helical transmembrane segment at 90–110 threads the bilayer; it reads VIIVIYLSVVGALLLYMAFLM. Residues 111–183 are Cytoplasmic-facing; the sequence is LVDPLIRKPD…TVFDRHKMLS (73 aa). The residue at position 144 (serine 144) is a Phosphoserine.

This sequence belongs to the TMEM9 family. In terms of assembly, interacts with the v-ATPase accessory protein ATP6AP2 and with the v-ATPase complex subunit ATP6V0D1; these interactions lead to the assembly of the v-ATPase complex. N-glycosylated. In terms of tissue distribution, expressed in heart, lung, kidney, liver and intestines. Enriched in the hepatocytes around the central vein.

Its subcellular location is the lysosome membrane. It is found in the late endosome membrane. The protein resides in the endosome. It localises to the multivesicular body membrane. Functionally, transmembrane protein that binds to and facilitates the assembly of lysosomal proton-transporting V-type ATPase (v-ATPase), resulting in enhanced lysosomal acidification and trafficking. By bringing the v-ATPase accessory protein ATP6AP2 and the v-ATPase subunit ATP6V0D1 together, allows v-ATPase complex formation and activation. TMEM9-controlled vesicular acidification induces hyperactivation of Wnt/beta-catenin signaling, involved in development, tissue homeostasis and tissue regeneration, through lysosomal degradation of adenomatous polyposis coli/APC. In the liver, involved in hepatic regeneration. This chain is Proton-transporting V-type ATPase complex assembly regulator TMEM9, found in Mus musculus (Mouse).